The primary structure comprises 342 residues: MTNLTLALDAMGGDYGPRITVPAALQALRLYSFLNFYLVGNKTDIEKYLSQVESDVLRRIEIIHTTEVVTMSDRPAHALRNRKQSSMRLAIELVRDGKAQACLSAGNTGALMAMSKVLLKTLPGIDRPALVSCLPAVNKTPVYLLDLGANVSCCSETLFQFAVMGSVLCEAVDKNCSPKVALLNVGIEEIKGNDQVQQAGQLLQQSPQINYTGFIEGNDLFSGRVDVIVCDGFVGNITLKTSEGIARLLVHQLEKGLTKGFFVRLMAKMIAPRINSVLNQMNPDHYNGASLIGLRGIVVKSHGSADESAYLQAISLAVTEAQRRLPQMIEERLESILLDINN.

This sequence belongs to the PlsX family. Homodimer. Probably interacts with PlsY.

The protein resides in the cytoplasm. The enzyme catalyses a fatty acyl-[ACP] + phosphate = an acyl phosphate + holo-[ACP]. Its pathway is lipid metabolism; phospholipid metabolism. Functionally, catalyzes the reversible formation of acyl-phosphate (acyl-PO(4)) from acyl-[acyl-carrier-protein] (acyl-ACP). This enzyme utilizes acyl-ACP as fatty acyl donor, but not acyl-CoA. This is Phosphate acyltransferase from Shewanella sediminis (strain HAW-EB3).